Here is a 232-residue protein sequence, read N- to C-terminus: Ribosomal RNA small subunit methyltransferase G (232 aa).

Residues glycine 93, leucine 98, 144-145 (VE), and arginine 163 each bind S-adenosyl-L-methionine.

The protein belongs to the methyltransferase superfamily. RNA methyltransferase RsmG family.

The protein resides in the cytoplasm. The enzyme catalyses guanosine(527) in 16S rRNA + S-adenosyl-L-methionine = N(7)-methylguanosine(527) in 16S rRNA + S-adenosyl-L-homocysteine. Its function is as follows. Specifically methylates the N7 position of guanine in position 527 of 16S rRNA. The protein is Ribosomal RNA small subunit methyltransferase G of Burkholderia pseudomallei (strain 668).